A 457-amino-acid polypeptide reads, in one-letter code: MSTHTETPVDGSAETITGAQPYEAGFTESSAGRVYTVTGGDWEQVLGVGEDDGERITVNMGPQHPSTHGVLRLVLEIEGETVTETRLVIGYLHTGIEKSCEYRTWTQAVTFLTRADYLSPLYNEAAYCLSVEKLLGITGEVPERATVIRVLVMELQRIASHLVWLATGGMELGATTGMIFGFREREKILDLLETITGLRMNHAYIRPGGLAQDIPDEVIPEIRAFLDYMPKRIREYHALLTGQPIWKARMVDVNFLDAAACLALGTTGPVLRAAGLPWDLRKTMPYCGYETYEFDVPTALEGDSYARYLVRIEEMGESLKIIEQCLDRLRPGPVMVADKKIAWPSQLAIGSDGMGNSLEYIRKIMGTSMEALIHHFKLVTEGFRVPAGQVYTQIESPRGELGYHVVSDGGTRPFRVHVRDPSFVNLQAVPALTEGGQVADVIVGVASVDPVLGGVDR.

Residues 1-23 are disordered; the sequence is MSTHTETPVDGSAETITGAQPYE.

It belongs to the complex I 49 kDa subunit family. NDH-1 is composed of 14 different subunits. Subunits NuoB, C, D, E, F, and G constitute the peripheral sector of the complex.

It is found in the cell membrane. The enzyme catalyses a quinone + NADH + 5 H(+)(in) = a quinol + NAD(+) + 4 H(+)(out). Functionally, NDH-1 shuttles electrons from NADH, via FMN and iron-sulfur (Fe-S) centers, to quinones in the respiratory chain. The immediate electron acceptor for the enzyme in this species is believed to be a menaquinone. Couples the redox reaction to proton translocation (for every two electrons transferred, four hydrogen ions are translocated across the cytoplasmic membrane), and thus conserves the redox energy in a proton gradient. In Parafrankia sp. (strain EAN1pec), this protein is NADH-quinone oxidoreductase subunit D.